Consider the following 248-residue polypeptide: Probable transcriptional regulatory protein Noc_0137 (248 aa).

This sequence belongs to the TACO1 family.

Its subcellular location is the cytoplasm. This Nitrosococcus oceani (strain ATCC 19707 / BCRC 17464 / JCM 30415 / NCIMB 11848 / C-107) protein is Probable transcriptional regulatory protein Noc_0137.